We begin with the raw amino-acid sequence, 168 residues long: Phosphopantetheine adenylyltransferase (168 aa).

Thr-10 lines the substrate pocket. Residues 10–11 (TF) and His-18 contribute to the ATP site. Residues Lys-42, Leu-74, and Arg-88 each contribute to the substrate site. ATP-binding positions include 89 to 91 (GLR), Glu-99, and 124 to 130 (NSFISST).

The protein belongs to the bacterial CoaD family. In terms of assembly, homohexamer. Mg(2+) serves as cofactor.

It is found in the cytoplasm. The catalysed reaction is (R)-4'-phosphopantetheine + ATP + H(+) = 3'-dephospho-CoA + diphosphate. It functions in the pathway cofactor biosynthesis; coenzyme A biosynthesis; CoA from (R)-pantothenate: step 4/5. Functionally, reversibly transfers an adenylyl group from ATP to 4'-phosphopantetheine, yielding dephospho-CoA (dPCoA) and pyrophosphate. The chain is Phosphopantetheine adenylyltransferase from Shewanella frigidimarina (strain NCIMB 400).